Reading from the N-terminus, the 277-residue chain is Hemin import ATP-binding protein HmuV (277 aa).

Residues 25–260 (IHAQGLNLIL…DIIERVYGWP (236 aa)) form the ABC transporter domain. 57–64 (GPNGAGKS) is a binding site for ATP.

Belongs to the ABC transporter superfamily. Heme (hemin) importer (TC 3.A.1.14.5) family. The complex is composed of two ATP-binding proteins (HmuV), two transmembrane proteins (HmuU) and a solute-binding protein (HmuT).

It localises to the cell inner membrane. Its function is as follows. Part of the ABC transporter complex HmuTUV involved in hemin import. Responsible for energy coupling to the transport system. The chain is Hemin import ATP-binding protein HmuV from Photobacterium profundum (strain SS9).